A 122-amino-acid chain; its full sequence is Large ribosomal subunit protein uL14 (122 aa).

It belongs to the universal ribosomal protein uL14 family. Part of the 50S ribosomal subunit. Forms a cluster with proteins L3 and L19. In the 70S ribosome, L14 and L19 interact and together make contacts with the 16S rRNA in bridges B5 and B8.

Its function is as follows. Binds to 23S rRNA. Forms part of two intersubunit bridges in the 70S ribosome. In Clostridium kluyveri (strain ATCC 8527 / DSM 555 / NBRC 12016 / NCIMB 10680 / K1), this protein is Large ribosomal subunit protein uL14.